A 349-amino-acid polypeptide reads, in one-letter code: tRNA pseudouridine synthase D (349 aa).

F27 contributes to the substrate binding site. Catalysis depends on D80, which acts as the Nucleophile. Position 129 (N129) interacts with substrate. The TRUD domain maps to 155–303 (GVPNYFGAQR…VEAARRAMLL (149 aa)). Substrate is bound at residue F329.

The protein belongs to the pseudouridine synthase TruD family.

The catalysed reaction is uridine(13) in tRNA = pseudouridine(13) in tRNA. Responsible for synthesis of pseudouridine from uracil-13 in transfer RNAs. This Escherichia coli O81 (strain ED1a) protein is tRNA pseudouridine synthase D.